A 150-amino-acid polypeptide reads, in one-letter code: Ribonuclease K6 (150 aa).

The first 23 residues, Met-1–Ala-23, serve as a signal peptide directing secretion. His-38 functions as the Proton acceptor in the catalytic mechanism. Cystine bridges form between Cys-46–Cys-104, Cys-60–Cys-114, Cys-78–Cys-129, and Cys-85–Cys-92. Asn-55 carries an N-linked (GlcNAc...) asparagine glycan. Residues Lys-61–Thr-65 and Lys-86 contribute to the substrate site. N-linked (GlcNAc...) asparagine glycosylation occurs at Asn-100. Arg-105 is a binding site for substrate. The active-site Proton donor is the His-145.

The protein belongs to the pancreatic ribonuclease family. Interacts (via N-terminus) with bacterial lipopolysaccharide (LPS).

It is found in the secreted. The protein resides in the lysosome. Its subcellular location is the cytoplasmic granule. Functionally, ribonuclease which shows a preference for the pyrimidines uridine and cytosine. Has potent antibacterial activity against a range of Gram-positive and Gram-negative bacteria, including P.aeruginosa, A.baumanii, M.luteus, S.aureus, E.faecalis, E.faecium, S.saprophyticus and E.coli. Causes loss of bacterial membrane integrity, and also promotes agglutination of Gram-negative bacteria. Probably contributes to urinary tract sterility. Bactericidal activity is independent of RNase activity. The polypeptide is Ribonuclease K6 (RNASE6) (Chlorocebus aethiops (Green monkey)).